We begin with the raw amino-acid sequence, 642 residues long: Fork head protein homolog 2 (642 aa).

Residues 1–23 (MTVRRLESKSEHISDDEERKEQL) form a disordered region. The region spanning 96–160 (IILGREPANP…NGIKVDGKLF (65 aa)) is the FHA domain. Positions 223–318 (KPPYSYSVMI…AKTRKTPRKR (96 aa)) form a DNA-binding region, fork-head. Positions 310 to 319 (KTRKTPRKRS) are enriched in basic residues. Disordered stretches follow at residues 310-392 (KTRK…ETYK), 519-574 (VSDS…TEEN), and 586-642 (ATME…KSSA). A phosphoserine mark is found at serine 319, serine 321, serine 322, serine 334, and serine 336. Positions 348–362 (TSIPAAEPASSTTSA) are enriched in low complexity. Composition is skewed to polar residues over residues 363–381 (RDQT…TAET), 519–552 (VSDS…SANK), and 599–642 (TPTS…KSSA). 3 positions are modified to phosphoserine: serine 375, serine 535, and serine 626.

Phosphorylated. Occurs periodically during mitosis.

The protein resides in the nucleus. In terms of biological role, required for promoter sequence element PCB-driven, M-phase-specific transcription. Acts as a transcriptional activator with a role in the regulation of mitosis. Binds, cooperatively with mcm1, the CLB cluster regulatory elements throughout the cell cycle. Regulates the periodic transcription of cdc15 and spo12. Required for the correct timing, positioning and contraction of the division septum. The protein is Fork head protein homolog 2 (fkh2) of Schizosaccharomyces pombe (strain 972 / ATCC 24843) (Fission yeast).